We begin with the raw amino-acid sequence, 164 residues long: MNIFIMRHGEAEVMANSDKARHLTVYGSKQAFLQGQWLKQHLSTLVINSLDRILVSPYVRAQETFHQVNQAFDLELENKFEIWEGITPYGHAHSVIDYLEVLKDEGVKSVLIVSHLPLVGEIVAELYGKRNPISFYPATIAQLLWDGNKSEILMHQASPVIYLK.

It belongs to the SixA phosphatase family.

The sequence is that of Phosphohistidine phosphatase SixA homolog (sixA-A) from Haemophilus influenzae (strain ATCC 51907 / DSM 11121 / KW20 / Rd).